The sequence spans 1224 residues: Cytosolic carboxypeptidase 1 (1224 aa).

Residues 361–398 (PPDVDDVVDESDDNDDAETESEIETEDDKDQNFKNDDI) are disordered. A compositionally biased stretch (acidic residues) spans 363 to 389 (DVDDVVDESDDNDDAETESEIETEDDK). The Peptidase M14 domain maps to 846–1136 (YPYTYSTLKM…KFCVGLLRLK (291 aa)). Zn(2+) contacts are provided by histidine 918, glutamate 921, and histidine 1015. Glutamate 1100 acts as the Proton donor/acceptor in catalysis. Residues 1186-1197 (SAESNDDQDAEL) show a composition bias toward acidic residues. Positions 1186-1224 (SAESNDDQDAELADNVGDYEANNQEDGLSDSDSTRILLS) are disordered. A compositionally biased stretch (polar residues) spans 1206–1224 (ANNQEDGLSDSDSTRILLS).

The protein belongs to the peptidase M14 family. Zn(2+) serves as cofactor.

Its subcellular location is the cytoplasm. It is found in the cytosol. The protein resides in the nucleus. The protein localises to the mitochondrion. It catalyses the reaction (L-glutamyl)(n+1)-gamma-L-glutamyl-L-glutamyl-[protein] + H2O = (L-glutamyl)(n)-gamma-L-glutamyl-L-glutamyl-[protein] + L-glutamate. It carries out the reaction C-terminal L-alpha-aminoacyl-L-glutamyl-L-glutamyl-[tubulin] + H2O = C-terminal L-alpha-aminoacyl-L-glutamyl-[tubulin] + L-glutamate. In terms of biological role, metallocarboxypeptidase that mediates protein deglutamylation of tubulin and non-tubulin target proteins. Catalyzes the removal of polyglutamate side chains present on the gamma-carboxyl group of glutamate residues within the C-terminal tail of alpha- and beta-tubulin. Specifically cleaves tubulin long-side-chains, while it is not able to remove the branching point glutamate. Also catalyzes the removal of polyglutamate residues from the carboxy-terminus of alpha-tubulin as well as non-tubulin proteins. The chain is Cytosolic carboxypeptidase 1 (AGTPBP1) from Gallus gallus (Chicken).